A 108-amino-acid chain; its full sequence is uncharacterized protein (108 aa).

The segment at 1–108 (MAKVTSEPQK…DKEQSETSVL (108 aa)) is disordered. Residues 26 to 56 (KGRKKGKTPRQRRSRSGVKGLKTTRKAKRPL) are compositionally biased toward basic residues. Positions 58-70 (GSSSQKAGETNTP) are enriched in polar residues. Residues 73–92 (KPKKARGPILRGRYHRLKEK) are compositionally biased toward basic residues. The span at 93–108 (MKKEEADKEQSETSVL) shows a compositional bias: basic and acidic residues.

This is an uncharacterized protein from Homo sapiens (Human).